Reading from the N-terminus, the 310-residue chain is Ribosomal protein uL3 glutamine methyltransferase (310 aa).

It belongs to the protein N5-glutamine methyltransferase family. PrmB subfamily.

The enzyme catalyses L-glutaminyl-[ribosomal protein uL3] + S-adenosyl-L-methionine = N(5)-methyl-L-glutaminyl-[ribosomal protein uL3] + S-adenosyl-L-homocysteine + H(+). Methylates large ribosomal subunit protein uL3 on a specific glutamine residue. This chain is Ribosomal protein uL3 glutamine methyltransferase, found in Vibrio anguillarum (strain ATCC 68554 / 775) (Listonella anguillarum).